The chain runs to 385 residues: Telomere-binding protein subunit beta (385 aa).

Disordered stretches follow at residues alanine 231 to threonine 329 and tryptophan 343 to lysine 385. Positions glycine 242–alanine 262 are enriched in basic residues. The span at lysine 263–valine 280 shows a compositional bias: basic and acidic residues. Composition is skewed to low complexity over residues lysine 295–serine 304, lysine 312–alanine 326, and glycine 365–serine 375. A compositionally biased stretch (basic residues) spans lysine 376 to lysine 385.

In terms of assembly, heterodimer of an alpha and a beta subunit.

It is found in the nucleus. It localises to the chromosome. Its subcellular location is the telomere. Functionally, may function as protective capping of the single-stranded telomeric overhang. May also participate in telomere length regulation during DNA replication. Binds specifically to the T4G4-containing extension on the 3'strand and protects this region of the telomere from nuclease digestion and chemical modification. The chain is Telomere-binding protein subunit beta (MAC-41A) from Sterkiella nova (Ciliate).